Here is a 198-residue protein sequence, read N- to C-terminus: A-type ATP synthase subunit E (198 aa).

It belongs to the V-ATPase E subunit family. As to quaternary structure, has multiple subunits with at least A(3), B(3), C, D, E, F, H, I and proteolipid K(x).

The protein localises to the cell membrane. Functionally, component of the A-type ATP synthase that produces ATP from ADP in the presence of a proton gradient across the membrane. The polypeptide is A-type ATP synthase subunit E (Pyrococcus horikoshii (strain ATCC 700860 / DSM 12428 / JCM 9974 / NBRC 100139 / OT-3)).